We begin with the raw amino-acid sequence, 402 residues long: Succinyl-diaminopimelate desuccinylase (402 aa).

H88 is a Zn(2+) binding site. Residue D90 is part of the active site. A Zn(2+)-binding site is contributed by D121. Catalysis depends on E155, which acts as the Proton acceptor. Residues E156, E184, and H374 each coordinate Zn(2+).

Belongs to the peptidase M20A family. DapE subfamily. As to quaternary structure, homodimer. Zn(2+) is required as a cofactor. Co(2+) serves as cofactor.

The enzyme catalyses N-succinyl-(2S,6S)-2,6-diaminopimelate + H2O = (2S,6S)-2,6-diaminopimelate + succinate. It functions in the pathway amino-acid biosynthesis; L-lysine biosynthesis via DAP pathway; LL-2,6-diaminopimelate from (S)-tetrahydrodipicolinate (succinylase route): step 3/3. In terms of biological role, catalyzes the hydrolysis of N-succinyl-L,L-diaminopimelic acid (SDAP), forming succinate and LL-2,6-diaminopimelate (DAP), an intermediate involved in the bacterial biosynthesis of lysine and meso-diaminopimelic acid, an essential component of bacterial cell walls. This chain is Succinyl-diaminopimelate desuccinylase, found in Psychrobacter sp. (strain PRwf-1).